Here is a 356-residue protein sequence, read N- to C-terminus: Histidinol-phosphate aminotransferase (356 aa).

At K214 the chain carries N6-(pyridoxal phosphate)lysine.

The protein belongs to the class-II pyridoxal-phosphate-dependent aminotransferase family. Histidinol-phosphate aminotransferase subfamily. Homodimer. Requires pyridoxal 5'-phosphate as cofactor.

The enzyme catalyses L-histidinol phosphate + 2-oxoglutarate = 3-(imidazol-4-yl)-2-oxopropyl phosphate + L-glutamate. Its pathway is amino-acid biosynthesis; L-histidine biosynthesis; L-histidine from 5-phospho-alpha-D-ribose 1-diphosphate: step 7/9. In Escherichia coli O127:H6 (strain E2348/69 / EPEC), this protein is Histidinol-phosphate aminotransferase.